The chain runs to 62 residues: Synergistic-type venom protein C8S2, chain 2 (62 aa).

Cystine bridges form between Cys-3–Cys-24, Cys-17–Cys-42, and Cys-46–Cys-57.

Belongs to the three-finger toxin family. Short-chain subfamily. Aminergic toxin sub-subfamily. As to quaternary structure, heterodimer of C8S2 chain 1 (AC P01410) and chain 2; disulfide-linked. As to expression, expressed by the venom gland.

It localises to the secreted. In terms of biological role, this protein shows a synergetic toxic effect in that it enhances the toxicity of other toxins. In Dendroaspis angusticeps (Eastern green mamba), this protein is Synergistic-type venom protein C8S2, chain 2.